A 179-amino-acid polypeptide reads, in one-letter code: 5'-deoxynucleotidase VV1_0013 (179 aa).

His53 serves as a coordination point for a divalent metal cation. Substrate is bound by residues 62–65 (DLPT) and Asp122. Asp122 serves as a coordination point for a divalent metal cation.

Belongs to the 5DNU family. In terms of assembly, homodimer. A divalent metal cation serves as cofactor.

The protein localises to the cytoplasm. The enzyme catalyses a 2'-deoxyribonucleoside 5'-phosphate + H2O = a 2'-deoxyribonucleoside + phosphate. In terms of biological role, catalyzes the strictly specific dephosphorylation of 2'-deoxyribonucleoside 5'-monophosphates. The protein is 5'-deoxynucleotidase VV1_0013 of Vibrio vulnificus (strain CMCP6).